The following is a 203-amino-acid chain: Cell division protein SepF (203 aa).

Disordered regions lie at residues 26 to 51 (DGEL…RRGQ) and 167 to 203 (GTAS…WRNQ). 2 stretches are compositionally biased toward basic and acidic residues: residues 39–50 (EPPRRSAPERRG) and 183–203 (RRSE…WRNQ).

It belongs to the SepF family. Homodimer. Interacts with FtsZ.

The protein resides in the cytoplasm. Functionally, cell division protein that is part of the divisome complex and is recruited early to the Z-ring. Probably stimulates Z-ring formation, perhaps through the cross-linking of FtsZ protofilaments. Its function overlaps with FtsA. This chain is Cell division protein SepF, found in Symbiobacterium thermophilum (strain DSM 24528 / JCM 14929 / IAM 14863 / T).